The following is a 123-amino-acid chain: Protein Wnt-7(I) (123 aa).

Ser-1 carries the O-palmitoleoyl serine; by PORCN lipid modification. Cys-89 and Cys-104 are disulfide-bonded. Residue Asn-90 is glycosylated (N-linked (GlcNAc...) asparagine). Residues 121–123 carry the Microbody targeting signal motif; the sequence is CKF.

The protein belongs to the Wnt family. In terms of processing, palmitoleoylation is required for efficient binding to frizzled receptors. Depalmitoleoylation leads to Wnt signaling pathway inhibition.

The protein localises to the secreted. It is found in the extracellular space. The protein resides in the extracellular matrix. Its function is as follows. Ligand for members of the frizzled family of seven transmembrane receptors. Probable developmental protein. May be a signaling molecule which affects the development of discrete regions of tissues. Is likely to signal over only few cell diameters. This chain is Protein Wnt-7(I) (WNT-7(I)), found in Eptatretus stoutii (Pacific hagfish).